The chain runs to 164 residues: Protein-export protein SecB (164 aa).

This sequence belongs to the SecB family. As to quaternary structure, homotetramer, a dimer of dimers. One homotetramer interacts with 1 SecA dimer.

It is found in the cytoplasm. Functionally, one of the proteins required for the normal export of preproteins out of the cell cytoplasm. It is a molecular chaperone that binds to a subset of precursor proteins, maintaining them in a translocation-competent state. It also specifically binds to its receptor SecA. The polypeptide is Protein-export protein SecB (Ruegeria sp. (strain TM1040) (Silicibacter sp.)).